A 471-amino-acid chain; its full sequence is 3-isopropylmalate dehydratase large subunit (471 aa).

Positions 347, 407, and 410 each coordinate [4Fe-4S] cluster.

Belongs to the aconitase/IPM isomerase family. LeuC type 1 subfamily. In terms of assembly, heterodimer of LeuC and LeuD. The cofactor is [4Fe-4S] cluster.

The enzyme catalyses (2R,3S)-3-isopropylmalate = (2S)-2-isopropylmalate. The protein operates within amino-acid biosynthesis; L-leucine biosynthesis; L-leucine from 3-methyl-2-oxobutanoate: step 2/4. Its function is as follows. Catalyzes the isomerization between 2-isopropylmalate and 3-isopropylmalate, via the formation of 2-isopropylmaleate. The chain is 3-isopropylmalate dehydratase large subunit from Prochlorococcus marinus (strain MIT 9211).